The sequence spans 201 residues: Putative tRNA-binding protein YtpR (201 aa).

Positions 90 to 200 (VDLSPKFVVG…GDYEAGDAFQ (111 aa)) constitute a tRNA-binding domain.

This is Putative tRNA-binding protein YtpR (ytpR) from Bacillus subtilis (strain 168).